Reading from the N-terminus, the 229-residue chain is ATP-dependent dethiobiotin synthetase BioD (229 aa).

An ATP-binding site is contributed by 15-20 (EIGKTL). Mg(2+) is bound at residue threonine 19. Lysine 40 is an active-site residue. ATP-binding positions include aspartate 57, 118–121 (EGVG), and 207–209 (PRL). Positions 57 and 118 each coordinate Mg(2+).

It belongs to the dethiobiotin synthetase family. As to quaternary structure, homodimer. It depends on Mg(2+) as a cofactor.

It localises to the cytoplasm. It carries out the reaction (7R,8S)-7,8-diammoniononanoate + CO2 + ATP = (4R,5S)-dethiobiotin + ADP + phosphate + 3 H(+). Its pathway is cofactor biosynthesis; biotin biosynthesis; biotin from 7,8-diaminononanoate: step 1/2. Functionally, catalyzes a mechanistically unusual reaction, the ATP-dependent insertion of CO2 between the N7 and N8 nitrogen atoms of 7,8-diaminopelargonic acid (DAPA, also called 7,8-diammoniononanoate) to form a ureido ring. This chain is ATP-dependent dethiobiotin synthetase BioD, found in Ralstonia nicotianae (strain ATCC BAA-1114 / GMI1000) (Ralstonia solanacearum).